We begin with the raw amino-acid sequence, 74 residues long: uncharacterized protein (74 aa).

Positions 55-74 (DENSESESKDGASWFKVYRG) are disordered.

This is an uncharacterized protein from Listeria innocua serovar 6a (strain ATCC BAA-680 / CLIP 11262).